The following is a 158-amino-acid chain: Snaclec jerdonuxin subunit alpha (158 aa).

Residues 1-23 (MGRFTFVSFGLLVVFLSLSGTGA) form the signal peptide. 3 disulfide bridges follow: C27/C38, C55/C152, and C127/C144. The 120-residue stretch at 34–153 (YDRYCYQAFS…CGTENPFVCK (120 aa)) folds into the C-type lectin domain.

Belongs to the snaclec family. Tetramer of 4 heterodimers of alpha and beta subunits; disulfide-linked. Expressed by the venom gland.

It is found in the secreted. Snaclec that strongly induces platelet aggregation, in a dose-dependent manner. In Protobothrops jerdonii (Jerdon's pitviper), this protein is Snaclec jerdonuxin subunit alpha.